The primary structure comprises 124 residues: uncharacterized protein (124 aa).

Belongs to the YciI family.

This is an uncharacterized protein from Rhizobium meliloti (strain 1021) (Ensifer meliloti).